The following is a 304-amino-acid chain: C-type lectin domain-containing protein 141 (304 aa).

The N-terminal stretch at 1–19 (MRSSSTLLIAFGLFLASMS) is a signal peptide. Residues 29-100 (GSGGHRPPSS…TTPEPTTTKV (72 aa)) form a disordered region. Over residues 51–99 (TKPPKSTSTPSTSTSTPTTTTTTTTTTTTTPTTTTTTTTTTTPEPTTTK) the composition is skewed to low complexity.

The chain is C-type lectin domain-containing protein 141 (clec-141) from Caenorhabditis elegans.